The following is a 264-amino-acid chain: Putative hydroxypyruvate isomerase (264 aa).

Catalysis depends on proton donor/acceptor residues glutamate 145 and glutamate 243.

It belongs to the hyi family.

The catalysed reaction is 3-hydroxypyruvate = 2-hydroxy-3-oxopropanoate. Its function is as follows. Catalyzes the reversible isomerization between hydroxypyruvate and 2-hydroxy-3-oxopropanoate (also termed tartronate semialdehyde). This Drosophila melanogaster (Fruit fly) protein is Putative hydroxypyruvate isomerase (Gip).